Reading from the N-terminus, the 384-residue chain is V-type proton ATPase subunit C 2 (384 aa).

The protein belongs to the V-ATPase C subunit family. As to quaternary structure, V-ATPase is a heteromultimeric enzyme made up of two complexes: the ATP-hydrolytic V1 complex and the proton translocation V0 complex. The V1 complex consists of three catalytic AB heterodimers that form a heterohexamer, three peripheral stalks each consisting of EG heterodimers, one central rotor including subunits D and F, and the regulatory subunits C and H. The proton translocation complex V0 consists of the proton transport subunit a, a ring of proteolipid subunits c9c'', rotary subunit d, subunits e and f, and the accessory subunits vah-19/Ac45 and vah-20/PRR.

Functionally, subunit of the V1 complex of vacuolar(H+)-ATPase (V-ATPase), a multisubunit enzyme composed of a peripheral complex (V1) that hydrolyzes ATP and a membrane integral complex (V0) that translocates protons. V-ATPase is responsible for acidifying and maintaining the pH of intracellular compartments and in some cell types, is targeted to the plasma membrane, where it is responsible for acidifying the extracellular environment. Subunit C is necessary for the assembly of the catalytic sector of the enzyme and is likely to have a specific function in its catalytic activity. This Ascidia sydneiensis samea (Vanadium-rich ascidian) protein is V-type proton ATPase subunit C 2 (VATC).